Here is a 228-residue protein sequence, read N- to C-terminus: MALRNLMTKKPFAGILTFRQQLRCVQTFSLPDLSYDYGALEPAISGEIMQLHHQKHHQTYITNYNNALQQLHDAINKGDSPTVAKLQGAIKFNGGGHINHSVFWKNLAPTREGGGEPPKGSLGSAIDTNFGSLEAVIQKMNAEGAALQGSGWVWLGLDKELKRLVIETTANQDPLVIKGPNLVPLLGIDVWEHAYYLQYKNVKPDYLKNIWKVINWKYAAEVYEKECP.

Residues 1-24 (MALRNLMTKKPFAGILTFRQQLRC) constitute a mitochondrion transit peptide. Residues His-52, His-100, Asp-189, and His-193 each coordinate Mn(2+).

Belongs to the iron/manganese superoxide dismutase family. As to quaternary structure, homotetramer. Mn(2+) serves as cofactor.

The protein localises to the mitochondrion matrix. It carries out the reaction 2 superoxide + 2 H(+) = H2O2 + O2. Functionally, destroys superoxide anion radicals which are normally produced within the cells and which are toxic to biological systems. The protein is Superoxide dismutase [Mn], mitochondrial (SODA) of Capsicum annuum (Capsicum pepper).